The sequence spans 271 residues: Probable iron transport system membrane protein HI_0359 (271 aa).

The next 8 helical transmembrane spans lie at 17-37 (ALLT…YLVL), 55-75 (IVLA…SGIF), 93-113 (TAMG…FTKI), 131-151 (SHQE…LIVF), 168-188 (VAGL…ALTI), 194-214 (VVGV…ALTL), 221-241 (MLWV…ILSY), and 245-265 (ASTG…ALAY).

The protein belongs to the ABC-3 integral membrane protein family.

The protein localises to the cell inner membrane. Functionally, part of an ATP-driven transport system HI_0359/HI_0360/HI_0361/HI_0362 for iron. In Haemophilus influenzae (strain ATCC 51907 / DSM 11121 / KW20 / Rd), this protein is Probable iron transport system membrane protein HI_0359.